The following is a 289-amino-acid chain: MIILKRLLQDKGAVIALGIIVLYVFLGLAAPLVTFYDPNHIDTANKFAGMSFQHLLGTDHLGRDILTRLIYAIRPSLLYVFVALFVSVLIGSILGFLSGYFQGFVDALIMRACDVMLAFPSYVVTLALIALFGMGAENIIMAFILTRWAWFCRVIRTSVMQYTASDHVRFAKTIGMNDMKIIHKHIMPLTLADIAIISSSSMCSMILQISGFSFLGLGVKAPTAEWGMMLNEARKVMFTHPEMMFAPGIAIVIIVMAFNFLSDALQIAIDPRISSKDKLRSVKKGVVQS.

5 helical membrane passes run 13–33, 77–97, 115–135, 194–214, and 249–269; these read AVIALGIIVLYVFLGLAAPLV, LLYVFVALFVSVLIGSILGFL, VMLAFPSYVVTLALIALFGMG, IAIISSSSMCSMILQISGFSF, and IAIVIIVMAFNFLSDALQIAI. The ABC transmembrane type-1 domain occupies 73 to 262; it reads IRPSLLYVFV…IIVMAFNFLS (190 aa).

The protein belongs to the binding-protein-dependent transport system permease family. The complex is composed of two ATP-binding proteins (CntD and CntF), two transmembrane proteins (CntB and CntC) and a solute-binding protein (CntA).

The protein localises to the cell membrane. Nickel/cobalt import is reduced in the presence of zinc. Part of the ABC transporter complex CntABCDF (Opp1) involved in the uptake of metal in complex with the metallophore staphylopine (StP). Involved in the import of divalent metals ions such as nickel, cobalt and zinc. Probably responsible for the translocation of the substrate across the membrane. Plays a major role in nickel/cobalt import in zinc-depleted conditions. Contributes to virulence. Required for full urease activity in vitro. This chain is Metal-staphylopine import system permease protein CntC, found in Staphylococcus aureus (strain NCTC 8325 / PS 47).